Here is a 92-residue protein sequence, read N- to C-terminus: Small ribosomal subunit protein uS19 (92 aa).

Belongs to the universal ribosomal protein uS19 family.

Its function is as follows. Protein S19 forms a complex with S13 that binds strongly to the 16S ribosomal RNA. In Cereibacter sphaeroides (strain ATCC 17029 / ATH 2.4.9) (Rhodobacter sphaeroides), this protein is Small ribosomal subunit protein uS19.